The primary structure comprises 343 residues: Anthranilate phosphoribosyltransferase (343 aa).

Residues glycine 86, 89–90 (GD), threonine 94, 96–99 (NIST), 114–122 (KHGNRSASG), and serine 126 each bind 5-phospho-alpha-D-ribose 1-diphosphate. Glycine 86 is an anthranilate binding site. Serine 98 provides a ligand contact to Mg(2+). Anthranilate is bound at residue asparagine 117. Arginine 172 serves as a coordination point for anthranilate. Positions 231 and 232 each coordinate Mg(2+).

Belongs to the anthranilate phosphoribosyltransferase family. In terms of assembly, homodimer. The cofactor is Mg(2+).

It catalyses the reaction N-(5-phospho-beta-D-ribosyl)anthranilate + diphosphate = 5-phospho-alpha-D-ribose 1-diphosphate + anthranilate. Its pathway is amino-acid biosynthesis; L-tryptophan biosynthesis; L-tryptophan from chorismate: step 2/5. Its function is as follows. Catalyzes the transfer of the phosphoribosyl group of 5-phosphorylribose-1-pyrophosphate (PRPP) to anthranilate to yield N-(5'-phosphoribosyl)-anthranilate (PRA). The protein is Anthranilate phosphoribosyltransferase of Synechococcus sp. (strain JA-3-3Ab) (Cyanobacteria bacterium Yellowstone A-Prime).